The primary structure comprises 78 residues: Large ribosomal subunit protein bL28 (78 aa).

The interval 1-20 is disordered; the sequence is MSRVCQVTGKGPVTGNNISH.

The protein belongs to the bacterial ribosomal protein bL28 family.

This Azotobacter vinelandii (strain DJ / ATCC BAA-1303) protein is Large ribosomal subunit protein bL28.